The primary structure comprises 388 residues: Succinate--CoA ligase [ADP-forming] subunit beta (388 aa).

Positions 9–244 (KQLFKEYGLP…PSQEDAREAH (236 aa)) constitute an ATP-grasp domain. Residues Lys46, 53–55 (GRG), Glu99, Thr102, and Glu107 each bind ATP. Residues Asn199 and Asp213 each coordinate Mg(2+). Substrate-binding positions include Asn264 and 321–323 (GIV).

The protein belongs to the succinate/malate CoA ligase beta subunit family. Heterotetramer of two alpha and two beta subunits. It depends on Mg(2+) as a cofactor.

The catalysed reaction is succinate + ATP + CoA = succinyl-CoA + ADP + phosphate. It carries out the reaction GTP + succinate + CoA = succinyl-CoA + GDP + phosphate. Its pathway is carbohydrate metabolism; tricarboxylic acid cycle; succinate from succinyl-CoA (ligase route): step 1/1. Succinyl-CoA synthetase functions in the citric acid cycle (TCA), coupling the hydrolysis of succinyl-CoA to the synthesis of either ATP or GTP and thus represents the only step of substrate-level phosphorylation in the TCA. The beta subunit provides nucleotide specificity of the enzyme and binds the substrate succinate, while the binding sites for coenzyme A and phosphate are found in the alpha subunit. The polypeptide is Succinate--CoA ligase [ADP-forming] subunit beta (Alteromonas mediterranea (strain DSM 17117 / CIP 110805 / LMG 28347 / Deep ecotype)).